The following is a 185-amino-acid chain: Transcriptional repressor NrdR (185 aa).

Positions Met-1–Ala-24 are disordered. A zinc finger lies at Cys-3 to Cys-34. The segment covering Gln-12 to Ala-24 has biased composition (basic and acidic residues). In terms of domain architecture, ATP-cone spans Leu-49–Asp-139. The segment at Glu-149–Ala-185 is disordered. Over residues Arg-176–Ala-185 the composition is skewed to basic residues.

The protein belongs to the NrdR family. Zn(2+) is required as a cofactor.

Functionally, negatively regulates transcription of bacterial ribonucleotide reductase nrd genes and operons by binding to NrdR-boxes. The polypeptide is Transcriptional repressor NrdR (Methylorubrum extorquens (strain PA1) (Methylobacterium extorquens)).